We begin with the raw amino-acid sequence, 313 residues long: tRNA(Ile)-lysidine synthase (313 aa).

Residue 37–42 coordinates ATP; it reads SGGPDS.

It belongs to the tRNA(Ile)-lysidine synthase family.

It localises to the cytoplasm. The enzyme catalyses cytidine(34) in tRNA(Ile2) + L-lysine + ATP = lysidine(34) in tRNA(Ile2) + AMP + diphosphate + H(+). In terms of biological role, ligates lysine onto the cytidine present at position 34 of the AUA codon-specific tRNA(Ile) that contains the anticodon CAU, in an ATP-dependent manner. Cytidine is converted to lysidine, thus changing the amino acid specificity of the tRNA from methionine to isoleucine. The sequence is that of tRNA(Ile)-lysidine synthase from Corynebacterium efficiens (strain DSM 44549 / YS-314 / AJ 12310 / JCM 11189 / NBRC 100395).